The following is a 134-amino-acid chain: Large ribosomal subunit protein uL16c (134 aa).

A disordered region spans residues 1 to 22 (MLSPKRTRFRKQHRGRMKGISH).

It belongs to the universal ribosomal protein uL16 family. As to quaternary structure, part of the 50S ribosomal subunit.

The protein localises to the plastid. It is found in the chloroplast. The chain is Large ribosomal subunit protein uL16c from Nicotiana tomentosiformis (Tobacco).